We begin with the raw amino-acid sequence, 302 residues long: Diacetylchitobiose uptake system permease protein NgcG (302 aa).

The next 6 membrane-spanning stretches (helical) occupy residues 40-60, 99-119, 131-151, 166-186, 221-241, and 268-288; these read LLILWSVIVIVPMLWVLMSSF, VIVVVSALILVMLLGAMCAYV, IYYVMLAGLTFPVFLAIVPLF, LILTYVAFALPFTMFFLYSFF, AAVAIFNFLGLWNQFLLPVAL, and GALFAAIVVTVVPVLLVYCVF. Residues 95–288 form the ABC transmembrane type-1 domain; sequence FLNSVIVVVS…VPVLLVYCVF (194 aa).

This sequence belongs to the binding-protein-dependent transport system permease family. As to quaternary structure, the complex is composed of two ATP-binding proteins (MsiK), two transmembrane proteins (NgcF and NgcG) and a solute-binding protein (NgcE).

Its subcellular location is the cell membrane. Functionally, part of the ABC transporter complex NgcEFG-MsiK involved in N,N'-diacetylchitobiose ((GlcNAc)2) uptake. Responsible for the translocation of the substrate across the membrane. This is Diacetylchitobiose uptake system permease protein NgcG from Streptomyces coelicolor (strain ATCC BAA-471 / A3(2) / M145).